We begin with the raw amino-acid sequence, 549 residues long: ATP synthase subunit alpha (549 aa).

Position 172–179 (172–179 (GDRKTGKT)) interacts with ATP. Residues 513-549 (SSTGESVVPDEHVEAMDEEDLGKESVKVKKPAPQKKK) form a disordered region. Residues 540–549 (VKKPAPQKKK) show a composition bias toward basic residues.

The protein belongs to the ATPase alpha/beta chains family. As to quaternary structure, F-type ATPases have 2 components, CF(1) - the catalytic core - and CF(0) - the membrane proton channel. CF(1) has five subunits: alpha(3), beta(3), gamma(1), delta(1), epsilon(1). CF(0) has three main subunits: a(1), b(2) and c(9-12). The alpha and beta chains form an alternating ring which encloses part of the gamma chain. CF(1) is attached to CF(0) by a central stalk formed by the gamma and epsilon chains, while a peripheral stalk is formed by the delta and b chains.

The protein resides in the cell membrane. It catalyses the reaction ATP + H2O + 4 H(+)(in) = ADP + phosphate + 5 H(+)(out). Functionally, produces ATP from ADP in the presence of a proton gradient across the membrane. The alpha chain is a regulatory subunit. The sequence is that of ATP synthase subunit alpha from Mycobacterium marinum (strain ATCC BAA-535 / M).